The primary structure comprises 491 residues: Glutamyl-tRNA(Gln) amidotransferase subunit A (491 aa).

Catalysis depends on charge relay system residues K78 and S158. Residue S182 is the Acyl-ester intermediate of the active site.

The protein belongs to the amidase family. GatA subfamily. Heterotrimer of A, B and C subunits.

The catalysed reaction is L-glutamyl-tRNA(Gln) + L-glutamine + ATP + H2O = L-glutaminyl-tRNA(Gln) + L-glutamate + ADP + phosphate + H(+). Functionally, allows the formation of correctly charged Gln-tRNA(Gln) through the transamidation of misacylated Glu-tRNA(Gln) in organisms which lack glutaminyl-tRNA synthetase. The reaction takes place in the presence of glutamine and ATP through an activated gamma-phospho-Glu-tRNA(Gln). This chain is Glutamyl-tRNA(Gln) amidotransferase subunit A, found in Bradyrhizobium sp. (strain BTAi1 / ATCC BAA-1182).